The primary structure comprises 347 residues: S-adenosylmethionine:tRNA ribosyltransferase-isomerase (347 aa).

Belongs to the QueA family. Monomer.

It localises to the cytoplasm. It carries out the reaction 7-aminomethyl-7-carbaguanosine(34) in tRNA + S-adenosyl-L-methionine = epoxyqueuosine(34) in tRNA + adenine + L-methionine + 2 H(+). It functions in the pathway tRNA modification; tRNA-queuosine biosynthesis. Transfers and isomerizes the ribose moiety from AdoMet to the 7-aminomethyl group of 7-deazaguanine (preQ1-tRNA) to give epoxyqueuosine (oQ-tRNA). The chain is S-adenosylmethionine:tRNA ribosyltransferase-isomerase from Bordetella bronchiseptica (strain ATCC BAA-588 / NCTC 13252 / RB50) (Alcaligenes bronchisepticus).